A 619-amino-acid polypeptide reads, in one-letter code: Chaperone protein HscA homolog (619 aa).

The protein belongs to the heat shock protein 70 family.

Functionally, chaperone involved in the maturation of iron-sulfur cluster-containing proteins. Has a low intrinsic ATPase activity which is markedly stimulated by HscB. The sequence is that of Chaperone protein HscA homolog from Shewanella amazonensis (strain ATCC BAA-1098 / SB2B).